The following is a 261-amino-acid chain: Cytochrome c oxidase subunit 3 (261 aa).

Topologically, residues 1 to 15 are mitochondrial matrix; sequence MTHQTHAYHMVNPSP. A helical membrane pass occupies residues 16-34; the sequence is WPLTGALSALLMTSGLAMW. Residues 35–40 are Mitochondrial intermembrane-facing; it reads FHFNST. Residues 41-66 traverse the membrane as a helical segment; that stretch reads ILLMIGLTTNTLTMYQWWRDVIREST. Residues 67-72 lie on the Mitochondrial matrix side of the membrane; it reads FQGHHT. The chain crosses the membrane as a helical span at residues 73–105; sequence PTVQKGLRYGMILFIISEVLFFTGFFWAFYHSS. Over 106–128 the chain is Mitochondrial intermembrane; it reads LAPTPELGGCWPPTGIHPLNPLE. Residues 129–152 form a helical membrane-spanning segment; it reads VPLLNTSVLLASGVSITWAHHSLM. The Mitochondrial matrix segment spans residues 153 to 155; that stretch reads EGN. Residues 156 to 183 traverse the membrane as a helical segment; sequence RYPMLQALFITIALGVYFTLLQASEYYE. Topologically, residues 184–190 are mitochondrial intermembrane; that stretch reads APFTISD. A helical membrane pass occupies residues 191–223; the sequence is GVYGSTFFVATGFHGLHVIIGSTFLIVCFFRQL. Over 224 to 232 the chain is Mitochondrial matrix; sequence KFHFTSNHH. The helical transmembrane segment at 233-256 threads the bilayer; sequence FGFEAAAWYWHFVDVVWLFLYVSI. Residues 257–261 lie on the Mitochondrial intermembrane side of the membrane; it reads YWWGS.

This sequence belongs to the cytochrome c oxidase subunit 3 family. In terms of assembly, component of the cytochrome c oxidase (complex IV, CIV), a multisubunit enzyme composed of 14 subunits. The complex is composed of a catalytic core of 3 subunits MT-CO1, MT-CO2 and MT-CO3, encoded in the mitochondrial DNA, and 11 supernumerary subunits COX4I, COX5A, COX5B, COX6A, COX6B, COX6C, COX7A, COX7B, COX7C, COX8 and NDUFA4, which are encoded in the nuclear genome. The complex exists as a monomer or a dimer and forms supercomplexes (SCs) in the inner mitochondrial membrane with NADH-ubiquinone oxidoreductase (complex I, CI) and ubiquinol-cytochrome c oxidoreductase (cytochrome b-c1 complex, complex III, CIII), resulting in different assemblies (supercomplex SCI(1)III(2)IV(1) and megacomplex MCI(2)III(2)IV(2)).

It localises to the mitochondrion inner membrane. The catalysed reaction is 4 Fe(II)-[cytochrome c] + O2 + 8 H(+)(in) = 4 Fe(III)-[cytochrome c] + 2 H2O + 4 H(+)(out). In terms of biological role, component of the cytochrome c oxidase, the last enzyme in the mitochondrial electron transport chain which drives oxidative phosphorylation. The respiratory chain contains 3 multisubunit complexes succinate dehydrogenase (complex II, CII), ubiquinol-cytochrome c oxidoreductase (cytochrome b-c1 complex, complex III, CIII) and cytochrome c oxidase (complex IV, CIV), that cooperate to transfer electrons derived from NADH and succinate to molecular oxygen, creating an electrochemical gradient over the inner membrane that drives transmembrane transport and the ATP synthase. Cytochrome c oxidase is the component of the respiratory chain that catalyzes the reduction of oxygen to water. Electrons originating from reduced cytochrome c in the intermembrane space (IMS) are transferred via the dinuclear copper A center (CU(A)) of subunit 2 and heme A of subunit 1 to the active site in subunit 1, a binuclear center (BNC) formed by heme A3 and copper B (CU(B)). The BNC reduces molecular oxygen to 2 water molecules using 4 electrons from cytochrome c in the IMS and 4 protons from the mitochondrial matrix. This chain is Cytochrome c oxidase subunit 3 (MT-CO3), found in Raphicerus campestris (Steenbok).